Reading from the N-terminus, the 374-residue chain is MDEEFVVTPWEVRGRVDYQKLMQQFGARPLTQAEVSLLEKYAGEVHPLIRRGFFYAHRDLDAILKWHGEGKPWALYTGRGPSGPVHIGHMVPWILLKWLSDKFGVEVYFQMTDDEKFYDDPEMRLEEATKWAYENALDVIALGFTPDKLHLIIDTKDIKPLYPIAAKVAKKLTWNTVKATFGFTDSTNIGLIFYPSLQIAVAFLPTELHGRPTPVLIPCAIDQDPYFRLARDIAESLGYPKPATLYSKFIMALTGESKMSASNPNSAIYTIDDEKTIRRKIANAYTGGRPTAEEQRRLGGNPDVCPVYHYHMLFDPDDASVEKIYHSCKSGALLCGECKQMLYEKIRKFVKQHQEAREKARDKVDAYRLSSKLS.

Positions 81-89 match the 'HIGH' region motif; sequence PSGPVHIGH. The short motif at 258–262 is the 'KMSKS' region element; that stretch reads KMSAS.

This sequence belongs to the class-I aminoacyl-tRNA synthetase family.

It is found in the cytoplasm. The catalysed reaction is tRNA(Trp) + L-tryptophan + ATP = L-tryptophyl-tRNA(Trp) + AMP + diphosphate + H(+). The protein is Tryptophan--tRNA ligase of Pyrobaculum calidifontis (strain DSM 21063 / JCM 11548 / VA1).